The following is a 111-amino-acid chain: MPKIVILPHQDLCPDGAVLEANSGETILDAALRNGIEIEHACEKSCACTTCHCIVREGFDSLPESSEQEDDMLDKAWGLEPESRLSCQARVTDEDLVVEIPRYTINHAREH.

The 2Fe-2S ferredoxin-type domain occupies 2 to 104 (PKIVILPHQD…DLVVEIPRYT (103 aa)). C42, C48, C51, and C87 together coordinate [2Fe-2S] cluster.

The protein belongs to the adrenodoxin/putidaredoxin family. [2Fe-2S] cluster serves as cofactor.

Its function is as follows. Ferredoxin are iron-sulfur proteins that transfer electrons in a wide variety of metabolic reactions. Although the function of this ferredoxin is unknown it is probable that it has a role as a cellular electron transfer protein. Involved in the in vivo assembly of the Fe-S clusters in a wide variety of iron-sulfur proteins. In Escherichia coli O157:H7, this protein is 2Fe-2S ferredoxin (fdx).